Here is a 165-residue protein sequence, read N- to C-terminus: Protein SEED AND ROOT HAIR PROTECTIVE PROTEIN (165 aa).

A signal peptide spans Met-1 to Ala-24.

The protein belongs to the plant proline-rich protein superfamily. Root hair and seed specific expression. Also observed in other tissues including siliques, roots and flowers.

The protein resides in the secreted. It localises to the cell wall. Contributes to cell wall structure in root hairs and seeds, especially in phosphate (Pi) deprivation conditions or in the presence of ethylene. Particularly important in maternal tissues (pericarps and seed coats) during seed development, especially under stress conditions. Confers thermotolerance in seed germination rate. The protein is Protein SEED AND ROOT HAIR PROTECTIVE PROTEIN of Arabidopsis thaliana (Mouse-ear cress).